We begin with the raw amino-acid sequence, 534 residues long: Ethanolamine kinase (534 aa).

Ser23 is subject to Phosphoserine.

The protein belongs to the choline/ethanolamine kinase family.

It localises to the cytoplasm. It catalyses the reaction ethanolamine + ATP = phosphoethanolamine + ADP + H(+). The catalysed reaction is choline + ATP = phosphocholine + ADP + H(+). It participates in phospholipid metabolism; phosphatidylethanolamine biosynthesis; phosphatidylethanolamine from ethanolamine: step 1/3. Functionally, catalyzes the committed step of phosphatidylethanolamine synthesis via the CDP-ethanolamine branch of the Kennedy pathway. Also exhibits choline kinase activity, thus contributing to phosphatidylcholine synthesis via the CDP-choline pathway, but its preferred substrate is ethanolamine. The sequence is that of Ethanolamine kinase (EKI1) from Saccharomyces cerevisiae (strain ATCC 204508 / S288c) (Baker's yeast).